Consider the following 261-residue polypeptide: Transmembrane and immunoglobulin domain-containing protein 1 (261 aa).

An N-terminal signal peptide occupies residues 1–26 (MVWKITGPLQACQLLLVVLSLPQGRT). Residues 27–113 (SSVLTVNGRT…LQRDQTVSVT (87 aa)) enclose the Ig-like C2-type 1 domain. The Extracellular segment spans residues 27-215 (SSVLTVNGRT…DFHLLVKDKV (189 aa)). Cysteine 53 and cysteine 102 are oxidised to a cystine. Asparagine 57, asparagine 82, asparagine 92, asparagine 117, asparagine 157, and asparagine 189 each carry an N-linked (GlcNAc...) asparagine glycan. The Ig-like C2-type 2 domain occupies 121-206 (PPLLSGNGFQ…SSSLKMETMD (86 aa)). Cysteine 142 and cysteine 194 are oxidised to a cystine. Residues 216–236 (FVMPAEPIIAACVVVVLTMAF) traverse the membrane as a helical segment. Residues 237-261 (ALFSRRKRIMKLCGKKNDPNSETAL) lie on the Cytoplasmic side of the membrane.

Homodimer. N-glycosylated.

It localises to the cell membrane. The protein resides in the cytoplasm. In terms of biological role, may control cell-cell adhesion, cell migration and proliferation, cell morphology, and protects renal epithelial cells from oxidative cell injury to promote cell survival. The protein is Transmembrane and immunoglobulin domain-containing protein 1 of Mus musculus (Mouse).